A 142-amino-acid polypeptide reads, in one-letter code: Large ribosomal subunit protein uL11 (142 aa).

This sequence belongs to the universal ribosomal protein uL11 family. In terms of assembly, part of the ribosomal stalk of the 50S ribosomal subunit. Interacts with L10 and the large rRNA to form the base of the stalk. L10 forms an elongated spine to which L12 dimers bind in a sequential fashion forming a multimeric L10(L12)X complex. One or more lysine residues are methylated.

In terms of biological role, forms part of the ribosomal stalk which helps the ribosome interact with GTP-bound translation factors. This is Large ribosomal subunit protein uL11 from Bartonella bacilliformis (strain ATCC 35685 / KC583 / Herrer 020/F12,63).